Consider the following 67-residue polypeptide: Large ribosomal subunit protein bL32 (67 aa).

Residues 1 to 19 (MAVPKRKMSRSNTRARRSQ) are compositionally biased toward basic residues. Residues 1–21 (MAVPKRKMSRSNTRARRSQWK) form a disordered region.

The protein belongs to the bacterial ribosomal protein bL32 family.

The chain is Large ribosomal subunit protein bL32 from Clavibacter sepedonicus (Clavibacter michiganensis subsp. sepedonicus).